The sequence spans 209 residues: Large ribosomal subunit protein uL3 (209 aa).

The segment at 127-164 (NFSGGQRTHGQSDRLRAPGSVGGASDPSRTFKGTKMGG) is disordered.

Belongs to the universal ribosomal protein uL3 family. In terms of assembly, part of the 50S ribosomal subunit. Forms a cluster with proteins L14 and L19.

One of the primary rRNA binding proteins, it binds directly near the 3'-end of the 23S rRNA, where it nucleates assembly of the 50S subunit. The polypeptide is Large ribosomal subunit protein uL3 (Chlorobium phaeobacteroides (strain BS1)).